The sequence spans 422 residues: Enolase 2 (422 aa).

Gln-162 serves as a coordination point for (2R)-2-phosphoglycerate. The active-site Proton donor is the Glu-204. Mg(2+) contacts are provided by Asp-241, Glu-285, and Asp-312. 4 residues coordinate (2R)-2-phosphoglycerate: Lys-337, Arg-366, Ser-367, and Lys-388. The Proton acceptor role is filled by Lys-337.

It belongs to the enolase family. Mg(2+) serves as cofactor.

It is found in the cytoplasm. Its subcellular location is the secreted. The protein resides in the cell surface. It catalyses the reaction (2R)-2-phosphoglycerate = phosphoenolpyruvate + H2O. The protein operates within carbohydrate degradation; glycolysis; pyruvate from D-glyceraldehyde 3-phosphate: step 4/5. Catalyzes the reversible conversion of 2-phosphoglycerate (2-PG) into phosphoenolpyruvate (PEP). It is essential for the degradation of carbohydrates via glycolysis. This chain is Enolase 2, found in Lactococcus lactis subsp. lactis (strain IL1403) (Streptococcus lactis).